Consider the following 133-residue polypeptide: Beta-synuclein (133 aa).

Repeat copies occupy residues 20–30 (EKTKQGVTEAA) and 31–41 (EKTKEGVLYVG). A 4 X 11 AA tandem repeats of [EGS]-K-T-K-[EQ]-[GQ]-V-X(4) region spans residues 20–66 (EKTKQGVTEAAEKTKEGVLYVGSKTSGVVQGVASVAEKTKEQASHLG). One copy of the 3; approximate repeat lies at 42-55 (SKTSGVVQGVASVA). A Phosphoserine modification is found at S45. Repeat 4 spans residues 56–66 (EKTKEQASHLG). Residues 96 to 133 (EVAQEAAEEPLIEPLMEPEGESYEDSPQEEYQEYEPEA) form a disordered region. The segment covering 97–133 (VAQEAAEEPLIEPLMEPEGESYEDSPQEEYQEYEPEA) has biased composition (acidic residues). S117 carries the post-translational modification Phosphoserine; by BARK1, CK2 and GRK5.

This sequence belongs to the synuclein family. In terms of processing, phosphorylated. Phosphorylation by G-protein coupled receptor kinases (GRK) is more efficient than phosphorylation by CK1, CK2 and CaM-kinase II. Highly expressed in the brain.

It localises to the cytoplasm. Its function is as follows. May be involved in neuronal plasticity. The protein is Beta-synuclein (Sncb) of Mus musculus (Mouse).